A 1435-amino-acid polypeptide reads, in one-letter code: Nitric oxide synthase 1 (1435 aa).

The interval 1 to 206 is interaction with NOSIP; the sequence is MEEHVFGVQQ…LQGSGDKNEL (206 aa). Positions 17–99 constitute a PDZ domain; that stretch reads SVRLFKRKVG…ETHVVLILRG (83 aa). 2 disordered regions span residues 110–201 and 277–304; these read TFTG…QGSG and NNPYSEKEQPPASGKQSPTKNGSPSKCP. The interaction with DYNLL1/PIN stretch occupies residues 164-246; it reads QGHGQEAGSP…TGVQVDRDFD (83 aa). Residues 290 to 300 show a composition bias toward polar residues; it reads GKQSPTKNGSP. Residue S340 coordinates (6R)-L-erythro-5,6,7,8-tetrahydrobiopterin. Residue C421 coordinates heme b. Residues Q484, W593, Y594, and E598 each coordinate L-arginine. (6R)-L-erythro-5,6,7,8-tetrahydrobiopterin-binding residues include V683, W684, and F697. Y712 serves as a coordination point for heme b. The interval 731-751 is calmodulin-binding; that stretch reads KRRAIGFKKLAEAVKFSAKLM. The Flavodoxin-like domain occupies 761–941; it reads ATILYATETG…AFRTWAKKVF (181 aa). Positions 767, 768, 769, 771, 772, 813, 814, and 818 each coordinate FMN. S853, S863, and S864 each carry phosphoserine. 5 residues coordinate FMN: S892, H897, C899, E925, and Q929. An FAD-binding FR-type domain is found at 996–1243; sequence KRVSAARLLS…VRGAPSFRLP (248 aa). R1016 is an NADP(+) binding site. Positions 1038, 1179, 1180, 1181, 1182, 1197, and 1199 each coordinate FAD. An NADP(+)-binding site is contributed by S1202. Positions 1203, 1216, 1217, and 1218 each coordinate FAD. Residues T1257, R1290, S1319, R1320, K1326, Y1328, Q1330, D1363, T1404, and R1406 each contribute to the NADP(+) site.

This sequence belongs to the NOS family. As to quaternary structure, homodimer. Interacts with DLG4; the interaction possibly being prevented by the association between NOS1 and CAPON. Forms a ternary complex with CAPON and RASD1. Forms a ternary complex with CAPON and SYN1. Interacts with ZDHHC23. Interacts with NOSIP; which may impair its synaptic location. Interacts with HTR4. Interacts with SLC6A4. Interacts with VAC14. Interacts (via N-terminal domain) with DLG4 (via N-terminal tandem pair of PDZ domains). Interacts with SLC6A4. Forms a complex with ASL, ASS1 and SLC7A1; the complex regulates cell-autonomous L-arginine synthesis and citrulline recycling while channeling extracellular L-arginine to nitric oxide synthesis pathway. Interacts with DMD; localizes NOS1 to sarcolemma in muscle cells. Interacts with DYNLL1; inhibits the nitric oxide synthase activity. The cofactor is heme b. FAD serves as cofactor. It depends on FMN as a cofactor. Requires (6R)-L-erythro-5,6,7,8-tetrahydrobiopterin as cofactor. Ubiquitinated; mediated by STUB1/CHIP in the presence of Hsp70 and Hsp40 (in vitro).

It is found in the cell membrane. It localises to the sarcolemma. The protein resides in the cell projection. The protein localises to the dendritic spine. The catalysed reaction is 2 L-arginine + 3 NADPH + 4 O2 + H(+) = 2 L-citrulline + 2 nitric oxide + 3 NADP(+) + 4 H2O. With respect to regulation, stimulated by calcium/calmodulin. Inhibited by DYNLL1 that prevents the dimerization of the protein. Inhibited by NOSIP. Functionally, produces nitric oxide (NO) which is a messenger molecule with diverse functions throughout the body. In the brain and peripheral nervous system, NO displays many properties of a neurotransmitter. Probably has nitrosylase activity and mediates cysteine S-nitrosylation of cytoplasmic target proteins such SRR. The protein is Nitric oxide synthase 1 (NOS1) of Oryctolagus cuniculus (Rabbit).